Consider the following 2197-residue polypeptide: Protein Ycf2 (2197 aa).

Position 1539–1546 (1539–1546 (GSIGTGRS)) interacts with ATP.

Belongs to the Ycf2 family.

It is found in the plastid. The protein localises to the chloroplast stroma. In terms of biological role, probable ATPase of unknown function. Its presence in a non-photosynthetic plant (Epifagus virginiana) and experiments in tobacco indicate that it has an essential function which is probably not related to photosynthesis. This Ipomoea purpurea (Common morning glory) protein is Protein Ycf2.